The chain runs to 359 residues: Molybdenum import ATP-binding protein ModC (359 aa).

The 236-residue stretch at 1 to 236 (MNTEIKARFR…IDLPAAFADD (236 aa)) folds into the ABC transporter domain. Residue 34–41 (GHSGSGKT) coordinates ATP. Positions 294–359 (QSSILNCVSA…AQIKAVALLA (66 aa)) constitute a Mop domain.

It belongs to the ABC transporter superfamily. Molybdate importer (TC 3.A.1.8) family. As to quaternary structure, the complex is composed of two ATP-binding proteins (ModC), two transmembrane proteins (ModB) and a solute-binding protein (ModA).

The protein resides in the cell inner membrane. It carries out the reaction molybdate(out) + ATP + H2O = molybdate(in) + ADP + phosphate + H(+). Part of the ABC transporter complex ModABC involved in molybdenum import. Responsible for energy coupling to the transport system. This is Molybdenum import ATP-binding protein ModC from Dechloromonas aromatica (strain RCB).